A 166-amino-acid polypeptide reads, in one-letter code: Signal peptidase complex catalytic subunit SEC11 (166 aa).

Residues M1 to Q9 are Cytoplasmic-facing. The chain crosses the membrane as a helical; Signal-anchor for type II membrane protein span at residues L10–A31. Residues N32–E166 lie on the Lumenal side of the membrane. Catalysis depends on charge relay system residues S44, H83, and D108. The segment at A152–L163 is C-terminal short (CTS) helix.

This sequence belongs to the peptidase S26B family. Component of the signal peptidase complex (SPC) composed of a catalytic subunit SEC11 and three accessory subunits SPC1, SPC2 and SPC3. The complex induces a local thinning of the ER membrane which is used to measure the length of the signal peptide (SP) h-region of protein substrates. This ensures the selectivity of the complex towards h-regions shorter than 18-20 amino acids. SPC associates with the translocon complex.

It is found in the endoplasmic reticulum membrane. It carries out the reaction Cleavage of hydrophobic, N-terminal signal or leader sequences from secreted and periplasmic proteins.. Functionally, catalytic component of the signal peptidase complex (SPC) which catalyzes the cleavage of N-terminal signal sequences from nascent proteins as they are translocated into the lumen of the endoplasmic reticulum. Specifically cleaves N-terminal signal peptides that contain a hydrophobic alpha-helix (h-region) shorter than 18-20 amino acids. This Clavispora lusitaniae (strain ATCC 42720) (Yeast) protein is Signal peptidase complex catalytic subunit SEC11 (SEC11).